Consider the following 512-residue polypeptide: D-alanine--D-alanyl carrier protein ligase (512 aa).

152-153 provides a ligand contact to ATP; it reads TS. Asp-199 lines the D-alanine pocket. 294-299 contacts ATP; it reads NAYGPT. Position 303 (Val-303) interacts with D-alanine. ATP contacts are provided by residues Asp-385, 397-400, and Lys-499; that span reads YGGR. Lys-499 contributes to the D-alanine binding site.

This sequence belongs to the ATP-dependent AMP-binding enzyme family. DltA subfamily.

Its subcellular location is the cytoplasm. It catalyses the reaction holo-[D-alanyl-carrier protein] + D-alanine + ATP = D-alanyl-[D-alanyl-carrier protein] + AMP + diphosphate. Its pathway is cell wall biogenesis; lipoteichoic acid biosynthesis. Its function is as follows. Catalyzes the first step in the D-alanylation of lipoteichoic acid (LTA), the activation of D-alanine and its transfer onto the D-alanyl carrier protein (Dcp) DltC. In an ATP-dependent two-step reaction, forms a high energy D-alanyl-AMP intermediate, followed by transfer of the D-alanyl residue as a thiol ester to the phosphopantheinyl prosthetic group of the Dcp. D-alanylation of LTA plays an important role in modulating the properties of the cell wall in Gram-positive bacteria, influencing the net charge of the cell wall. The sequence is that of D-alanine--D-alanyl carrier protein ligase from Streptococcus equi subsp. equi (strain 4047).